The chain runs to 182 residues: Orotate phosphoribosyltransferase (182 aa).

5-phospho-alpha-D-ribose 1-diphosphate contacts are provided by residues R93, K94, K97, and 119 to 127 (EDIATTGTS). The orotate site is built by T123 and R151.

This sequence belongs to the purine/pyrimidine phosphoribosyltransferase family. PyrE subfamily. In terms of assembly, homodimer. The cofactor is Mg(2+).

The catalysed reaction is orotidine 5'-phosphate + diphosphate = orotate + 5-phospho-alpha-D-ribose 1-diphosphate. Its pathway is pyrimidine metabolism; UMP biosynthesis via de novo pathway; UMP from orotate: step 1/2. Its function is as follows. Catalyzes the transfer of a ribosyl phosphate group from 5-phosphoribose 1-diphosphate to orotate, leading to the formation of orotidine monophosphate (OMP). This chain is Orotate phosphoribosyltransferase, found in Haloquadratum walsbyi (strain DSM 16790 / HBSQ001).